Reading from the N-terminus, the 171-residue chain is MTRQSTYSRDQLLASARGELFAPDSGRLPNDPMLMFDRITEISNTGGAHGKGVIRAELDIRPDLWFFGCHFIGDPVMPGCLGLDAMWQLTGFFLTWIGAPGRGRALGCGEVKFTGQVLPSARLVRYEIDVSRVINRKLVMAQTDARMLVDGREIYTAKDLRVGMFTSTENF.

The active site involves H70.

It belongs to the thioester dehydratase family. FabA subfamily. As to quaternary structure, homodimer.

It is found in the cytoplasm. It catalyses the reaction a (3R)-hydroxyacyl-[ACP] = a (2E)-enoyl-[ACP] + H2O. It carries out the reaction (3R)-hydroxydecanoyl-[ACP] = (2E)-decenoyl-[ACP] + H2O. The enzyme catalyses (2E)-decenoyl-[ACP] = (3Z)-decenoyl-[ACP]. The protein operates within lipid metabolism; fatty acid biosynthesis. In terms of biological role, necessary for the introduction of cis unsaturation into fatty acids. Catalyzes the dehydration of (3R)-3-hydroxydecanoyl-ACP to E-(2)-decenoyl-ACP and then its isomerization to Z-(3)-decenoyl-ACP. Can catalyze the dehydratase reaction for beta-hydroxyacyl-ACPs with saturated chain lengths up to 16:0, being most active on intermediate chain length. The polypeptide is 3-hydroxydecanoyl-[acyl-carrier-protein] dehydratase (Xanthomonas axonopodis pv. citri (strain 306)).